We begin with the raw amino-acid sequence, 410 residues long: Argininosuccinate synthase (410 aa).

10–18 (AYSGGLDTS) provides a ligand contact to ATP. Residues Tyr88 and Ser93 each contribute to the L-citrulline site. Gly118 contributes to the ATP binding site. L-aspartate is bound by residues Thr120, Asn124, and Asp125. Asn124 contacts L-citrulline. L-citrulline is bound by residues Arg128, Ser177, Ser186, Glu262, and Tyr274.

This sequence belongs to the argininosuccinate synthase family. Type 1 subfamily. Homotetramer.

The protein resides in the cytoplasm. It catalyses the reaction L-citrulline + L-aspartate + ATP = 2-(N(omega)-L-arginino)succinate + AMP + diphosphate + H(+). The protein operates within amino-acid biosynthesis; L-arginine biosynthesis; L-arginine from L-ornithine and carbamoyl phosphate: step 2/3. The protein is Argininosuccinate synthase of Caldanaerobacter subterraneus subsp. tengcongensis (strain DSM 15242 / JCM 11007 / NBRC 100824 / MB4) (Thermoanaerobacter tengcongensis).